We begin with the raw amino-acid sequence, 242 residues long: Segregation and condensation protein A (242 aa).

This sequence belongs to the ScpA family. As to quaternary structure, component of a cohesin-like complex composed of ScpA, ScpB and the Smc homodimer, in which ScpA and ScpB bind to the head domain of Smc. The presence of the three proteins is required for the association of the complex with DNA.

It is found in the cytoplasm. In terms of biological role, participates in chromosomal partition during cell division. May act via the formation of a condensin-like complex containing Smc and ScpB that pull DNA away from mid-cell into both cell halves. In Streptococcus pneumoniae serotype 4 (strain ATCC BAA-334 / TIGR4), this protein is Segregation and condensation protein A.